The following is a 339-amino-acid chain: Malate dehydrogenase 3, cytoplasmic (339 aa).

NAD(+) is bound by residues 22–23 (NI), Asp49, and Gly96. Residue Arg105 coordinates oxaloacetate. NAD(+) contacts are provided by Gln119 and Asn138. 4 residues coordinate oxaloacetate: Asn138, Arg169, His194, and Ser249. The Proton acceptor role is filled by His194.

It belongs to the LDH/MDH superfamily. MDH type 2 family. Expressed in rosette leaves at low levels.

It is found in the cytoplasm. The enzyme catalyses (S)-malate + NAD(+) = oxaloacetate + NADH + H(+). Functionally, catalyzes a reversible NAD-dependent dehydrogenase reaction involved in central metabolism and redox homeostasis between organelle compartments. This chain is Malate dehydrogenase 3, cytoplasmic, found in Arabidopsis thaliana (Mouse-ear cress).